Here is a 1340-residue protein sequence, read N- to C-terminus: TSET complex member tstE (1340 aa).

The segment covering 56-67 (NQSQTSPNSNDG) has biased composition (low complexity). Disordered regions lie at residues 56–75 (NQSQ…GSGG) and 110–131 (SGSG…GGGQ). 4 WD repeats span residues 208 to 246 (VNQI…VIGK), 250 to 294 (DPTE…LQTI), 345 to 384 (GHKK…SFLN), and 397 to 436 (IEHS…NPQE). The span at 1216-1251 (KSHMSSTTTLRRSPSIENIRTTSTTFDSSKFNTDNQ) shows a compositional bias: polar residues. The disordered stretch occupies residues 1216-1340 (KSHMSSTTTL…TPTPTTTLSS (125 aa)). Over residues 1252–1275 (ELFDDDSDDDSDSGADADVDSENE) the composition is skewed to acidic residues. Residues 1286 to 1318 (ASLQHNDNSSLTNITVTDNDSNLDQDITSNTGS) show a composition bias toward polar residues. Residues 1328-1340 (LSSTPTPTTTLSS) show a composition bias toward low complexity.

Component of the TSET complex, a heterohexamer composed of tstA, tstB, tstC, tstD, tstE and tstF, which may act in plasma membrane turnover. tstA, tstB, tstC and tstD are likely to be the core complex members with tstE and tstF acting as associated scaffold proteins.

The sequence is that of TSET complex member tstE from Dictyostelium discoideum (Social amoeba).